The sequence spans 179 residues: Large ribosomal subunit protein uL6 (179 aa).

The protein belongs to the universal ribosomal protein uL6 family. In terms of assembly, part of the 50S ribosomal subunit.

Functionally, this protein binds to the 23S rRNA, and is important in its secondary structure. It is located near the subunit interface in the base of the L7/L12 stalk, and near the tRNA binding site of the peptidyltransferase center. This chain is Large ribosomal subunit protein uL6, found in Akkermansia muciniphila (strain ATCC BAA-835 / DSM 22959 / JCM 33894 / BCRC 81048 / CCUG 64013 / CIP 107961 / Muc).